The chain runs to 391 residues: Elongation factor Tu 1 (391 aa).

The tr-type G domain occupies 10-201 (KLHVNIGTIG…EVDRYIPTPE (192 aa)). The interval 19 to 26 (GHVDHGKT) is G1. 19-26 (GHVDHGKT) lines the GTP pocket. Residue T26 participates in Mg(2+) binding. Residues 55-59 (GITIS) form a G2 region. The G3 stretch occupies residues 76 to 79 (DCPG). Residues 76–80 (DCPGH) and 131–134 (NKVD) each bind GTP. A G4 region spans residues 131–134 (NKVD). Residues 169-171 (SAL) are G5.

The protein belongs to the TRAFAC class translation factor GTPase superfamily. Classic translation factor GTPase family. EF-Tu/EF-1A subfamily. As to quaternary structure, monomer.

It localises to the cytoplasm. It carries out the reaction GTP + H2O = GDP + phosphate + H(+). Its function is as follows. GTP hydrolase that promotes the GTP-dependent binding of aminoacyl-tRNA to the A-site of ribosomes during protein biosynthesis. This chain is Elongation factor Tu 1, found in Bartonella bacilliformis (strain ATCC 35685 / KC583 / Herrer 020/F12,63).